The following is a 366-amino-acid chain: MWRESPERQQPLRTGLTTGTCATACALAAARLLLTGKSCDECEVTLPKGRKVRLPIAECRRLDVYSAYAATVKDAGDDPDVTHGAQVFVIASLGTGAGEVRFSAADGVGTVTRDGLSLAVGEPAINPTPRRMIREHLLELADECAYNGAFDVAVGVENGAALAQKTMNPRLGIVGGLSILGTTGIVRPFSCSAYIASIHQGVDVARANGYDHIAACTGNASEDYARRHYDLPDMALIEMGDFAGALLKYLRRSPLRRLTIVGGFGKISKLACGHLDLHSKASEIDLDFIADAAGSLGATPNTLAAMRAANTSIEALRLAGDLPLGDLICRRAWEKAAYTMHNSMQLEVVAIDRQGLPVGAYAGEDL.

Belongs to the CbiD family.

It carries out the reaction Co-precorrin-5B + S-adenosyl-L-methionine = Co-precorrin-6A + S-adenosyl-L-homocysteine. The protein operates within cofactor biosynthesis; adenosylcobalamin biosynthesis; cob(II)yrinate a,c-diamide from sirohydrochlorin (anaerobic route): step 6/10. Its function is as follows. Catalyzes the methylation of C-1 in cobalt-precorrin-5B to form cobalt-precorrin-6A. In Hahella chejuensis (strain KCTC 2396), this protein is Cobalt-precorrin-5B C(1)-methyltransferase.